The sequence spans 892 residues: DNA ligase (892 aa).

Residues methionine 1–glycine 23 form a disordered region. NAD(+) is bound by residues aspartate 99–aspartate 103, serine 148–leucine 149, and glutamate 182. Lysine 184 serves as the catalytic N6-AMP-lysine intermediate. The NAD(+) site is built by arginine 205, glutamate 244, lysine 369, and lysine 393. Residues cysteine 490, cysteine 493, cysteine 509, and cysteine 515 each contribute to the Zn(2+) site. A BRCT domain is found at glycine 810–glutamate 892.

Belongs to the NAD-dependent DNA ligase family. LigA subfamily. It depends on Mg(2+) as a cofactor. Requires Mn(2+) as cofactor.

The enzyme catalyses NAD(+) + (deoxyribonucleotide)n-3'-hydroxyl + 5'-phospho-(deoxyribonucleotide)m = (deoxyribonucleotide)n+m + AMP + beta-nicotinamide D-nucleotide.. Functionally, DNA ligase that catalyzes the formation of phosphodiester linkages between 5'-phosphoryl and 3'-hydroxyl groups in double-stranded DNA using NAD as a coenzyme and as the energy source for the reaction. It is essential for DNA replication and repair of damaged DNA. The protein is DNA ligase of Bifidobacterium adolescentis (strain ATCC 15703 / DSM 20083 / NCTC 11814 / E194a).